A 348-amino-acid chain; its full sequence is MTIRVGIAGATGYTGVELVRLLAQHPEAEVVVAGTESYQGQHLAAVYPHLRERVDLVGREASPEALAGCDVVFTSLPHGLTMALAPAVLAAGGRLIDLGADFRLRDVTAYEQWYRKTHTAPDLMEEAVYGLPELYRERIRGARLVGNPGCYPTACALAAAPLLQAGVVETEGIIFDAKSGVSGAGRGVNLGVHFSEVNENFKAYNIAGTHRHTPEIEQTLSDLAGRPVVVSFTPHLVPMTRGILATGYFTLKAERTTEQLVDLFREFYAGEPFVRVRPAGELPTTKQVWGSNYCDIGLQVDPRTRRVLVISVIDNLVKGAAGQAIQNMNLLFGLPETTGLLNAGPVYP.

The active site involves Cys-150.

The protein belongs to the NAGSA dehydrogenase family. Type 1 subfamily.

Its subcellular location is the cytoplasm. The catalysed reaction is N-acetyl-L-glutamate 5-semialdehyde + phosphate + NADP(+) = N-acetyl-L-glutamyl 5-phosphate + NADPH + H(+). It functions in the pathway amino-acid biosynthesis; L-arginine biosynthesis; N(2)-acetyl-L-ornithine from L-glutamate: step 3/4. Functionally, catalyzes the NADPH-dependent reduction of N-acetyl-5-glutamyl phosphate to yield N-acetyl-L-glutamate 5-semialdehyde. In Symbiobacterium thermophilum (strain DSM 24528 / JCM 14929 / IAM 14863 / T), this protein is N-acetyl-gamma-glutamyl-phosphate reductase.